A 133-amino-acid polypeptide reads, in one-letter code: Ribosome-binding factor A (133 aa).

This sequence belongs to the RbfA family. In terms of assembly, monomer. Binds 30S ribosomal subunits, but not 50S ribosomal subunits or 70S ribosomes.

The protein localises to the cytoplasm. Its function is as follows. One of several proteins that assist in the late maturation steps of the functional core of the 30S ribosomal subunit. Associates with free 30S ribosomal subunits (but not with 30S subunits that are part of 70S ribosomes or polysomes). Required for efficient processing of 16S rRNA. May interact with the 5'-terminal helix region of 16S rRNA. The polypeptide is Ribosome-binding factor A (Shigella boydii serotype 18 (strain CDC 3083-94 / BS512)).